The chain runs to 131 residues: Cytochrome c-552 (131 aa).

Heme c-binding residues include Cys-11, Cys-14, His-15, and Met-69.

In terms of processing, binds 1 heme c group covalently per subunit.

Its function is as follows. This monoheme basic protein appears to function as an electron donor to cytochrome oxidase in T.thermophilus. The polypeptide is Cytochrome c-552 (cycA) (Thermus thermophilus).